The following is a 416-amino-acid chain: Phosphatidylinositol 5-phosphate 4-kinase type-2 gamma (416 aa).

The region spanning 38-415 (ASDPMLSVFM…RFREFISNIF (378 aa)) is the PIPK domain.

In terms of processing, phosphorylated, phosphorylation is induced by EGF.

It is found in the endoplasmic reticulum. It localises to the cytoplasm. The catalysed reaction is a 1,2-diacyl-sn-glycero-3-phospho-(1D-myo-inositol-5-phosphate) + ATP = a 1,2-diacyl-sn-glycero-3-phospho-(1D-myo-inositol-4,5-bisphosphate) + ADP + H(+). It carries out the reaction 1,2-dihexadecanoyl-sn-glycero-3-phospho-(1D-myo-inositol-5-phosphate) + ATP = 1,2-dihexadecanoyl-sn-glycero-3-phospho-(1D-myo-inositol-4,5-bisphosphate) + ADP + H(+). The enzyme catalyses 1,2-dihexadecanoyl-sn-glycero-3-phospho-(1D-myo-inositol-5-phosphate) + GTP = 1,2-dihexadecanoyl-sn-glycero-3-phospho-(1D-myo-inositol-4,5-bisphosphate) + GDP + H(+). Its function is as follows. Phosphatidylinositol 5-phosphate 4-kinase with low enzymatic activity. May be a GTP sensor, has higher GTP-dependent kinase activity than ATP-dependent kinase activity. This is Phosphatidylinositol 5-phosphate 4-kinase type-2 gamma (pip4k2c) from Danio rerio (Zebrafish).